The primary structure comprises 379 residues: 1-deoxy-D-xylulose 5-phosphate reductoisomerase (379 aa).

NADPH-binding residues include T10, G11, S12, V13, and N121. A 1-deoxy-D-xylulose 5-phosphate-binding site is contributed by K122. Residue E123 participates in NADPH binding. D147 contributes to the Mn(2+) binding site. S148, E149, S173, and H196 together coordinate 1-deoxy-D-xylulose 5-phosphate. E149 contributes to the Mn(2+) binding site. Residue G202 participates in NADPH binding. 1-deoxy-D-xylulose 5-phosphate-binding residues include S209, N214, K215, and E218. E218 provides a ligand contact to Mn(2+).

It belongs to the DXR family. Requires Mg(2+) as cofactor. The cofactor is Mn(2+).

The enzyme catalyses 2-C-methyl-D-erythritol 4-phosphate + NADP(+) = 1-deoxy-D-xylulose 5-phosphate + NADPH + H(+). Its pathway is isoprenoid biosynthesis; isopentenyl diphosphate biosynthesis via DXP pathway; isopentenyl diphosphate from 1-deoxy-D-xylulose 5-phosphate: step 1/6. Its function is as follows. Catalyzes the NADPH-dependent rearrangement and reduction of 1-deoxy-D-xylulose-5-phosphate (DXP) to 2-C-methyl-D-erythritol 4-phosphate (MEP). The sequence is that of 1-deoxy-D-xylulose 5-phosphate reductoisomerase from Chlamydia abortus (strain DSM 27085 / S26/3) (Chlamydophila abortus).